The primary structure comprises 562 residues: Arginine--tRNA ligase (562 aa).

The 'HIGH' region motif lies at 122–132; the sequence is PNIAKDMHVGH.

The protein belongs to the class-I aminoacyl-tRNA synthetase family. As to quaternary structure, monomer.

The protein localises to the cytoplasm. The catalysed reaction is tRNA(Arg) + L-arginine + ATP = L-arginyl-tRNA(Arg) + AMP + diphosphate. The chain is Arginine--tRNA ligase from Chlamydia abortus (strain DSM 27085 / S26/3) (Chlamydophila abortus).